The following is a 455-amino-acid chain: Bifunctional protein GlmU (455 aa).

The pyrophosphorylase stretch occupies residues 1-229 (MLNSAMSVVI…ISETEGVNNR (229 aa)). UDP-N-acetyl-alpha-D-glucosamine is bound by residues 11–14 (LAAG), Lys25, Gln76, 81–82 (GT), 103–105 (YGD), Gly140, Glu154, Asn169, and Asn227. Position 105 (Asp105) interacts with Mg(2+). Asn227 is a Mg(2+) binding site. The linker stretch occupies residues 230–250 (LQLSRLERIYQAEQAEKLLLA). Residues 251 to 455 (GVMLRDPARF…KQGWQRPVKK (205 aa)) are N-acetyltransferase. The UDP-N-acetyl-alpha-D-glucosamine site is built by Arg333 and Lys351. His363 functions as the Proton acceptor in the catalytic mechanism. Positions 366 and 377 each coordinate UDP-N-acetyl-alpha-D-glucosamine. Residues Ala380, 386 to 387 (NY), Ser405, Ala423, and Arg440 each bind acetyl-CoA.

In the N-terminal section; belongs to the N-acetylglucosamine-1-phosphate uridyltransferase family. The protein in the C-terminal section; belongs to the transferase hexapeptide repeat family. Homotrimer. Mg(2+) is required as a cofactor.

The protein localises to the cytoplasm. It carries out the reaction alpha-D-glucosamine 1-phosphate + acetyl-CoA = N-acetyl-alpha-D-glucosamine 1-phosphate + CoA + H(+). The catalysed reaction is N-acetyl-alpha-D-glucosamine 1-phosphate + UTP + H(+) = UDP-N-acetyl-alpha-D-glucosamine + diphosphate. It functions in the pathway nucleotide-sugar biosynthesis; UDP-N-acetyl-alpha-D-glucosamine biosynthesis; N-acetyl-alpha-D-glucosamine 1-phosphate from alpha-D-glucosamine 6-phosphate (route II): step 2/2. Its pathway is nucleotide-sugar biosynthesis; UDP-N-acetyl-alpha-D-glucosamine biosynthesis; UDP-N-acetyl-alpha-D-glucosamine from N-acetyl-alpha-D-glucosamine 1-phosphate: step 1/1. It participates in bacterial outer membrane biogenesis; LPS lipid A biosynthesis. In terms of biological role, catalyzes the last two sequential reactions in the de novo biosynthetic pathway for UDP-N-acetylglucosamine (UDP-GlcNAc). The C-terminal domain catalyzes the transfer of acetyl group from acetyl coenzyme A to glucosamine-1-phosphate (GlcN-1-P) to produce N-acetylglucosamine-1-phosphate (GlcNAc-1-P), which is converted into UDP-GlcNAc by the transfer of uridine 5-monophosphate (from uridine 5-triphosphate), a reaction catalyzed by the N-terminal domain. The polypeptide is Bifunctional protein GlmU (Salmonella arizonae (strain ATCC BAA-731 / CDC346-86 / RSK2980)).